A 132-amino-acid polypeptide reads, in one-letter code: U11/U12 small nuclear ribonucleoprotein 25 kDa protein (132 aa).

In terms of domain architecture, Ubiquitin-like spans 41–132; it reads MTVRVCKMDG…VSFIKKLRQK (92 aa).

As to quaternary structure, component of the U11/U12 snRNPs that are part of the U12-type spliceosome.

It localises to the nucleus. This is U11/U12 small nuclear ribonucleoprotein 25 kDa protein (SNRNP25) from Homo sapiens (Human).